Reading from the N-terminus, the 332-residue chain is Anthranilate phosphoribosyltransferase (332 aa).

5-phospho-alpha-D-ribose 1-diphosphate is bound by residues Gly79, 82 to 83 (GD), Ser87, 89 to 92 (NIST), 107 to 115 (KHGNRSVSS), and Ser119. Gly79 is a binding site for anthranilate. Ser91 serves as a coordination point for Mg(2+). Asn110 is an anthranilate binding site. Arg165 is a binding site for anthranilate. The Mg(2+) site is built by Asp223 and Glu224.

The protein belongs to the anthranilate phosphoribosyltransferase family. In terms of assembly, homodimer. Requires Mg(2+) as cofactor.

It carries out the reaction N-(5-phospho-beta-D-ribosyl)anthranilate + diphosphate = 5-phospho-alpha-D-ribose 1-diphosphate + anthranilate. The protein operates within amino-acid biosynthesis; L-tryptophan biosynthesis; L-tryptophan from chorismate: step 2/5. Catalyzes the transfer of the phosphoribosyl group of 5-phosphorylribose-1-pyrophosphate (PRPP) to anthranilate to yield N-(5'-phosphoribosyl)-anthranilate (PRA). The chain is Anthranilate phosphoribosyltransferase from Serratia proteamaculans (strain 568).